The chain runs to 1070 residues: DNA double-strand break repair Rad50 ATPase (1070 aa).

Residues arginine 12, 32 to 38 (NGSGKSS), and glutamine 142 each bind ATP. 3 coiled-coil regions span residues 227–257 (LEEL…RLQE), 369–403 (ECRT…EKAG), and 449–478 (LREL…KEIR). Residues 508–607 (LENLEDFNEL…KLNRLKEAKK (100 aa)) form the Zinc-hook domain. 2 residues coordinate Zn(2+): cysteine 555 and cysteine 558. Coiled coils occupy residues 570 to 614 (TAEE…QAYD) and 878 to 908 (LKRL…ADEL). Position 969–974 (969–974 (LLSGGE)) interacts with ATP.

This sequence belongs to the SMC family. RAD50 subfamily. Homodimer. Forms a heterotetramer composed of two Mre11 subunits and two Rad50 subunits. Zn(2+) is required as a cofactor.

Functionally, part of the Rad50/Mre11 complex, which is involved in the early steps of DNA double-strand break (DSB) repair. The complex may facilitate opening of the processed DNA ends to aid in the recruitment of HerA and NurA. Rad50 controls the balance between DNA end bridging and DNA resection via ATP-dependent structural rearrangements of the Rad50/Mre11 complex. This chain is DNA double-strand break repair Rad50 ATPase, found in Methanosarcina mazei (strain ATCC BAA-159 / DSM 3647 / Goe1 / Go1 / JCM 11833 / OCM 88) (Methanosarcina frisia).